A 259-amino-acid chain; its full sequence is Peroxisomal membrane protein 11B (259 aa).

Residue Lys43 is modified to N6-acetyllysine. Residues 157 to 176 (LKGSGGGVPGGSETGGLGGP) form a disordered region. Gly residues predominate over residues 159 to 176 (GSGGGVPGGSETGGLGGP). An interaction with PEX19, PEX11G and FIS1 and peroxisome targeting region spans residues 211-259 (VVRNACDLFIPLDKLGLWRCGPGIVGLCGLVSSILSILTLIYPWLRLKP). The chain crosses the membrane as a helical span at residues 233 to 255 (GIVGLCGLVSSILSILTLIYPWL).

It belongs to the peroxin-11 family. Homodimer. Heterodimer with PEX11G. Interacts with PEX19. Interacts with FIS1.

The protein resides in the peroxisome membrane. Its function is as follows. Involved in peroxisomal proliferation. May regulate peroxisome division by recruiting the dynamin-related GTPase DNM1L to the peroxisomal membrane. Promotes membrane protrusion and elongation on the peroxisomal surface. The sequence is that of Peroxisomal membrane protein 11B (PEX11B) from Homo sapiens (Human).